The chain runs to 371 residues: D-alanine--D-alanine ligase (371 aa).

Residues K154–D361 form the ATP-grasp domain. R182–E237 contributes to the ATP binding site. Mg(2+) is bound by residues D316, E328, and N330.

It belongs to the D-alanine--D-alanine ligase family. It depends on Mg(2+) as a cofactor. The cofactor is Mn(2+).

It is found in the cytoplasm. The catalysed reaction is 2 D-alanine + ATP = D-alanyl-D-alanine + ADP + phosphate + H(+). It participates in cell wall biogenesis; peptidoglycan biosynthesis. Its function is as follows. Cell wall formation. The sequence is that of D-alanine--D-alanine ligase from Mycobacterium sp. (strain JLS).